The primary structure comprises 250 residues: DNA repair protein RecO (250 aa).

Belongs to the RecO family.

In terms of biological role, involved in DNA repair and RecF pathway recombination. This chain is DNA repair protein RecO, found in Staphylococcus aureus (strain bovine RF122 / ET3-1).